The following is a 101-amino-acid chain: uncharacterized protein (101 aa).

This is an uncharacterized protein from Mycobacterium bovis (strain ATCC BAA-935 / AF2122/97).